The following is a 240-amino-acid chain: UDP-2,3-diacylglucosamine hydrolase (240 aa).

The Mn(2+) site is built by D8, H10, D41, N79, and H114. Residue 79–80 (NR) participates in substrate binding. Residues D122, S160, N164, K167, and H195 each contribute to the substrate site. The Mn(2+) site is built by H195 and H197.

It belongs to the LpxH family. Mn(2+) serves as cofactor.

Its subcellular location is the cell inner membrane. It carries out the reaction UDP-2-N,3-O-bis[(3R)-3-hydroxytetradecanoyl]-alpha-D-glucosamine + H2O = 2-N,3-O-bis[(3R)-3-hydroxytetradecanoyl]-alpha-D-glucosaminyl 1-phosphate + UMP + 2 H(+). The protein operates within glycolipid biosynthesis; lipid IV(A) biosynthesis; lipid IV(A) from (3R)-3-hydroxytetradecanoyl-[acyl-carrier-protein] and UDP-N-acetyl-alpha-D-glucosamine: step 4/6. Hydrolyzes the pyrophosphate bond of UDP-2,3-diacylglucosamine to yield 2,3-diacylglucosamine 1-phosphate (lipid X) and UMP by catalyzing the attack of water at the alpha-P atom. Involved in the biosynthesis of lipid A, a phosphorylated glycolipid that anchors the lipopolysaccharide to the outer membrane of the cell. The sequence is that of UDP-2,3-diacylglucosamine hydrolase from Pectobacterium carotovorum subsp. carotovorum (strain PC1).